The following is an 860-amino-acid chain: Mycobactin import ATP-binding/permease protein IrtA (860 aa).

Residues 1 to 293 lie on the Cytoplasmic side of the membrane; it reads MARGIQGVMM…GRLLAPLKTT (293 aa). The 110-residue stretch at 15–124 folds into the FAD-binding FR-type domain; it reads ARDHQATVVS…LGSAGFSVPE (110 aa). Residues 70-73, 87-91, 97-98, and 238-240 contribute to the FAD site; these read RAYT, DVVLH, AS, and TEG. Positions 242–275 are disordered; the sequence is AMGTKRGDDDKTPEVNPAPRADKPEAPAPAAAGR. The chain crosses the membrane as a helical span at residues 294-314; that stretch reads LIISGVLQAIITLVQLAPFVL. The region spanning 295–577 is the ABC transmembrane type-1 domain; it reads IISGVLQAII…IAYGLGGIRG (283 aa). Topologically, residues 315–335 are periplasmic; it reads LVELARLLLSGASSDRLWTLG. The chain crosses the membrane as a helical span at residues 336 to 356; the sequence is VVAISLLGTGSFLAAALTLWL. The Cytoplasmic segment spans residues 357–409; sequence HLVDARFARDLRTGLLTKMSRLPLGWFTARGSGSIKQLVQDDTLSLHYLITHA. The chain crosses the membrane as a helical span at residues 410 to 430; the sequence is IPDAVAAVIAPVAVLVYLFVV. Topologically, residues 431-433 are periplasmic; that stretch reads DWR. The chain crosses the membrane as a helical span at residues 434 to 454; sequence LALVMFVPVLIYLVLMTVMTI. Residues 455-525 are Cytoplasmic-facing; that stretch reads QSGPKIAQSQ…KKSMMDLVTR (71 aa). Residues 526-546 form a helical membrane-spanning segment; the sequence is PGTFLWLIVAVGTPMITSGAM. Residues 547–550 lie on the Periplasmic side of the membrane; that stretch reads DPVD. Residues 551–571 form a helical membrane-spanning segment; that stretch reads ILPFLLLGTTFGVRLLGIAYG. Over 572-860 the chain is Cytoplasmic; sequence LGGIRGGMLA…AAGPTGEAVR (289 aa). The ABC transporter domain occupies 609–842; that stretch reads VVFDNVTFGY…AGRYRQLWET (234 aa). An ATP-binding site is contributed by 642–649; that stretch reads GPSGSGKS.

This sequence belongs to the ABC transporter superfamily. Siderophore-Fe(3+) uptake transporter (SIUT) (TC 3.A.1.21) family. Forms a heterodimer with IrtB. FAD serves as cofactor.

Its subcellular location is the cell inner membrane. In terms of biological role, part of the ABC transporter complex IrtAB involved in the import of iron-bound mycobactin (Fe-MBT) and carboxymycobactin (Fe-cMBT). Has a preference for Fe-MBT over Fe-cMBT. Mycobactins are then reduced by the siderophore interaction domain to facilitate iron release in the bacterial cell. Transmembrane domains (TMD) form a pore in the membrane and the ATP-binding domain (NBD) is responsible for energy generation. The protein is Mycobactin import ATP-binding/permease protein IrtA of Mycolicibacterium smegmatis (strain ATCC 700084 / mc(2)155) (Mycobacterium smegmatis).